The following is a 92-amino-acid chain: Large ribosomal subunit protein uL23c (92 aa).

Belongs to the universal ribosomal protein uL23 family. As to quaternary structure, part of the 50S ribosomal subunit.

The protein localises to the plastid. The protein resides in the chloroplast. Functionally, binds to 23S rRNA. In Chara vulgaris (Common stonewort), this protein is Large ribosomal subunit protein uL23c (rpl23).